The primary structure comprises 74 residues: Large ribosomal subunit protein uL30 (74 aa).

It belongs to the universal ribosomal protein uL30 family. Part of the 50S ribosomal subunit.

The chain is Large ribosomal subunit protein uL30 from Micrococcus luteus (strain ATCC 4698 / DSM 20030 / JCM 1464 / CCM 169 / CCUG 5858 / IAM 1056 / NBRC 3333 / NCIMB 9278 / NCTC 2665 / VKM Ac-2230) (Micrococcus lysodeikticus).